A 109-amino-acid polypeptide reads, in one-letter code: Small ribosomal subunit protein bS6 (109 aa).

It belongs to the bacterial ribosomal protein bS6 family.

Binds together with bS18 to 16S ribosomal RNA. The protein is Small ribosomal subunit protein bS6 of Anaplasma phagocytophilum (strain HZ).